The following is a 185-amino-acid chain: MKRWYVVHAYSGFEKSVAQALRDRISRIEIQDRFGDVLVPAEEVVEMRSGQKRRSEHKFFPGYVLIQIETYYEGGVPRIDNECWHLVKETPKVMGFIGGTADRPLPISSDEADVILRRVQDGAEKPRPKVLFEPGQMVRVIDGPFNDFDGLVEEVNYEKNRLRVAVLIFGRPTPVDLDFGQVQKS.

One can recognise a KOW domain in the interval 134–162; sequence PGQMVRVIDGPFNDFDGLVEEVNYEKNRL.

Belongs to the NusG family.

Participates in transcription elongation, termination and antitermination. The protein is Transcription termination/antitermination protein NusG of Xylella fastidiosa (strain Temecula1 / ATCC 700964).